A 468-amino-acid polypeptide reads, in one-letter code: A-type ATP synthase subunit B (468 aa).

Belongs to the ATPase alpha/beta chains family. As to quaternary structure, has multiple subunits with at least A(3), B(3), C, D, E, F, H, I and proteolipid K(x).

Its subcellular location is the cell membrane. Component of the A-type ATP synthase that produces ATP from ADP in the presence of a proton gradient across the membrane. The B chain is a regulatory subunit. The protein is A-type ATP synthase subunit B of Haloferax volcanii (strain ATCC 29605 / DSM 3757 / JCM 8879 / NBRC 14742 / NCIMB 2012 / VKM B-1768 / DS2) (Halobacterium volcanii).